Here is a 78-residue protein sequence, read N- to C-terminus: MNRTKLVLGAVILGSTLLAGCSSNAKIDQLSTDVQTLNAKVDQLSNDVTAIRSDVQAAKDDAARANQRLDNQAHSYRK.

A signal peptide spans 1–20; the sequence is MNRTKLVLGAVILGSTLLAG. Residue Cys-21 is the site of N-palmitoyl cysteine attachment. Cys-21 carries S-diacylglycerol cysteine lipidation. The stretch at 22–75 forms a coiled coil; the sequence is SSNAKIDQLSTDVQTLNAKVDQLSNDVTAIRSDVQAAKDDAARANQRLDNQAHS. 2 consecutive repeats follow at residues 24–34 and 38–48; these read NAKIDQLSTDV and NAKVDQLSNDV. Lys-78 bears the N6-murein peptidoglycan lysine mark.

Belongs to the Lpp family. In terms of assembly, homotrimer.

The protein localises to the cell outer membrane. The protein resides in the secreted. It is found in the cell wall. Functionally, a highly abundant outer membrane lipoprotein that controls the distance between the inner and outer membranes. The only protein known to be covalently linked to the peptidoglycan network (PGN). Also non-covalently binds the PGN. The link between the cell outer membrane and PGN contributes to maintenance of the structural and functional integrity of the cell envelope, and maintains the correct distance between the PGN and the outer membrane. The polypeptide is Major outer membrane lipoprotein Lpp (Erwinia amylovora (Fire blight bacteria)).